The following is a 393-amino-acid chain: tRNA-specific 2-thiouridylase MnmA (393 aa).

ATP-binding positions include 19–26 and Leu45; that span reads AMSGGVDS. Cys113 (nucleophile) is an active-site residue. Cysteines 113 and 210 form a disulfide. An ATP-binding site is contributed by Gly137. The interaction with tRNA stretch occupies residues 160 to 162; sequence RDQ. The active-site Cysteine persulfide intermediate is Cys210.

This sequence belongs to the MnmA/TRMU family.

It is found in the cytoplasm. The catalysed reaction is S-sulfanyl-L-cysteinyl-[protein] + uridine(34) in tRNA + AH2 + ATP = 2-thiouridine(34) in tRNA + L-cysteinyl-[protein] + A + AMP + diphosphate + H(+). Catalyzes the 2-thiolation of uridine at the wobble position (U34) of tRNA, leading to the formation of s(2)U34. This is tRNA-specific 2-thiouridylase MnmA from Afipia carboxidovorans (strain ATCC 49405 / DSM 1227 / KCTC 32145 / OM5) (Oligotropha carboxidovorans).